The chain runs to 141 residues: Large ribosomal subunit protein uL11 (141 aa).

It belongs to the universal ribosomal protein uL11 family. In terms of assembly, part of the ribosomal stalk of the 50S ribosomal subunit. Interacts with L10 and the large rRNA to form the base of the stalk. L10 forms an elongated spine to which L12 dimers bind in a sequential fashion forming a multimeric L10(L12)X complex. Post-translationally, one or more lysine residues are methylated.

Its function is as follows. Forms part of the ribosomal stalk which helps the ribosome interact with GTP-bound translation factors. This chain is Large ribosomal subunit protein uL11, found in Exiguobacterium sp. (strain ATCC BAA-1283 / AT1b).